The primary structure comprises 369 residues: Histidinol-phosphate aminotransferase (369 aa).

K223 is modified (N6-(pyridoxal phosphate)lysine).

This sequence belongs to the class-II pyridoxal-phosphate-dependent aminotransferase family. Histidinol-phosphate aminotransferase subfamily. Homodimer. Requires pyridoxal 5'-phosphate as cofactor.

The enzyme catalyses L-histidinol phosphate + 2-oxoglutarate = 3-(imidazol-4-yl)-2-oxopropyl phosphate + L-glutamate. It participates in amino-acid biosynthesis; L-histidine biosynthesis; L-histidine from 5-phospho-alpha-D-ribose 1-diphosphate: step 7/9. This is Histidinol-phosphate aminotransferase from Shouchella clausii (strain KSM-K16) (Alkalihalobacillus clausii).